The chain runs to 399 residues: Elongation factor Tu (399 aa).

The tr-type G domain occupies 10–209 (KPHVNIGTIG…EVDAYIPTPE (200 aa)). A G1 region spans residues 19 to 26 (GHVDHGKT). Residue 19–26 (GHVDHGKT) participates in GTP binding. Threonine 26 contributes to the Mg(2+) binding site. The interval 60 to 64 (GITIA) is G2. A G3 region spans residues 81–84 (DCPG). Residues 81–85 (DCPGH) and 136–139 (NKQD) each bind GTP. The segment at 136–139 (NKQD) is G4. The tract at residues 174–176 (SAL) is G5.

This sequence belongs to the TRAFAC class translation factor GTPase superfamily. Classic translation factor GTPase family. EF-Tu/EF-1A subfamily. As to quaternary structure, monomer.

The protein resides in the cytoplasm. It catalyses the reaction GTP + H2O = GDP + phosphate + H(+). Functionally, GTP hydrolase that promotes the GTP-dependent binding of aminoacyl-tRNA to the A-site of ribosomes during protein biosynthesis. This Helicobacter pylori (strain ATCC 700392 / 26695) (Campylobacter pylori) protein is Elongation factor Tu.